Consider the following 168-residue polypeptide: WAP four-disulfide core domain protein 2 (168 aa).

A signal peptide spans 1–30; it reads MPACRLCLLATGLLLGLLLFTPLSATGTRA. WAP domains are found at residues 31-74 and 119-167; these read EKPG…SKPN and NGEK…TTPK. Intrachain disulfides connect C36–C62, C45–C66, C49–C61, and C55–C70. The disordered stretch occupies residues 100–123; it reads PLSRGQVSTKPPVVTKEGGNGEKQ. Cystine bridges form between C126–C154, C137–C158, C141–C153, and C147–C163.

In terms of assembly, homotrimer; disulfide-linked.

Its subcellular location is the secreted. Its function is as follows. Broad range protease inhibitor. The polypeptide is WAP four-disulfide core domain protein 2 (Wfdc2) (Rattus norvegicus (Rat)).